The sequence spans 380 residues: Ribosomal RNA large subunit methyltransferase F (380 aa).

Disordered stretches follow at residues 1-54 (MSHK…PRNA) and 260-279 (SQVM…ATDK). Over residues 21 to 32 (QRQVVSKSSLQK) the composition is skewed to low complexity. Residues 44 to 53 (QKSKALHPRN) show a composition bias toward basic residues. Residues 260–270 (SQVMSPQVQPS) show a composition bias toward low complexity.

Belongs to the methyltransferase superfamily. METTL16/RlmF family.

It localises to the cytoplasm. It catalyses the reaction adenosine(1618) in 23S rRNA + S-adenosyl-L-methionine = N(6)-methyladenosine(1618) in 23S rRNA + S-adenosyl-L-homocysteine + H(+). Functionally, specifically methylates the adenine in position 1618 of 23S rRNA. In Shewanella pealeana (strain ATCC 700345 / ANG-SQ1), this protein is Ribosomal RNA large subunit methyltransferase F.